The primary structure comprises 764 residues: Tyrosine-protein phosphatase corkscrew (764 aa).

Residues 1–95 (WFHGNLSGKE…GTVVHLRQPF (95 aa)) enclose the SH2 domain. The 406-residue stretch at 117-522 (FWEEFESLQQ…KFVYYAVQHY (406 aa)) folds into the Tyrosine-protein phosphatase domain. A PTPase insert (Cys/Ser-rich) region spans residues 174–325 (IRLPTDGDLY…LNGEGNQFKT (152 aa)). The disordered stretch occupies residues 246–273 (SKHKRSESMSASANASAAGTGPGTPTAA). The segment covering 255–273 (SASANASAAGTGPGTPTAA) has biased composition (low complexity). Substrate contacts are provided by residues D422, 460-466 (CSAGIGR), and Q507. The active-site Phosphocysteine intermediate is the C460. A disordered region spans residues 599-666 (AAKLQPPLPP…NANGNGNILG (68 aa)). Low complexity predominate over residues 612-666 (SNNNNSSGNSGSYCNSSSSTSTAQHNGVVSSSNNCSSGSGSANSSNANGNGNILG).

Belongs to the protein-tyrosine phosphatase family. Non-receptor class subfamily.

Its subcellular location is the cytoplasm. It carries out the reaction O-phospho-L-tyrosyl-[protein] + H2O = L-tyrosyl-[protein] + phosphate. Required in all receptor tyrosine kinase signaling pathways. Functions downstream of the receptor tyrosine kinase torso, acting in concert with D-Raf via tailless. Also functions downstream of Egfr (epidermal growth factor receptor) and btl (fibroblast growth factor receptor). The SH2 domain suggests that csw effects its role by mediating heteromeric protein interactions. Maternally required for normal determination of cell fates at the termini of the embryo. Required for cell fate specification of the ventral ectoderm, in the developing embryonic CNS and for embryonic tracheal cell migration. Functions during imaginal development for proper formation of adult structures such as eyes, aristae, L5 wing vein and the tarsal claw. The sequence is that of Tyrosine-protein phosphatase corkscrew (csw) from Drosophila virilis (Fruit fly).